A 60-amino-acid polypeptide reads, in one-letter code: Potassium channel toxin alpha-KTx 12.7 (60 aa).

The first 22 residues, 1–22 (MSNMPVLIITLLLFSMYISTAA), serve as a signal peptide directing secretion. Intrachain disulfides connect C30-C51, C36-C56, and C40-C58.

This sequence belongs to the short scorpion toxin superfamily. Potassium channel inhibitor family. Alpha-KTx 12 subfamily. In terms of tissue distribution, expressed by the venom gland.

Its subcellular location is the secreted. Functionally, inhibits voltage-gated potassium channels. The polypeptide is Potassium channel toxin alpha-KTx 12.7 (Lychas mucronatus (Chinese swimming scorpion)).